Here is a 204-residue protein sequence, read N- to C-terminus: MDTFNFIICISALFHSTYGDDGGTPMLDTETQNYLVDLHNLLRRSVDPTAKDMLKMEWSPGAALNAQNAAAKCVMQHSSATERQIQDPFNYVCGENIYVTTAKPDWAAAVNSWFNERNDFTYGVGPNSDKMIGHYTQVAWAKTYLLGCGLAFCPGNYYPYVSICHYCPMGNMINSIKTPYEAGEWCASCPESCEDKLCTSNPTA.

The signal sequence occupies residues 1 to 19 (MDTFNFIICISALFHSTYG). Positions 36-138 (VDLHNLLRRS…DKMIGHYTQV (103 aa)) constitute an SCP domain. Residues 140–161 (WAKTYLLGCGLAFCPGNYYPYV) form a helical membrane-spanning segment.

This sequence belongs to the CRISP family. Expressed only in oviduct.

It is found in the membrane. The protein resides in the secreted. In terms of biological role, involved in sperm chemoattraction. The protein is Allurin (crisp-a) of Xenopus tropicalis (Western clawed frog).